We begin with the raw amino-acid sequence, 435 residues long: Serine--tRNA ligase (435 aa).

An L-serine-binding site is contributed by 233–235 (TAE). 264-266 (RAE) is a binding site for ATP. An L-serine-binding site is contributed by glutamate 287. 351-354 (EISS) serves as a coordination point for ATP. Serine 386 contacts L-serine.

The protein belongs to the class-II aminoacyl-tRNA synthetase family. Type-1 seryl-tRNA synthetase subfamily. Homodimer. The tRNA molecule binds across the dimer.

Its subcellular location is the cytoplasm. It carries out the reaction tRNA(Ser) + L-serine + ATP = L-seryl-tRNA(Ser) + AMP + diphosphate + H(+). The enzyme catalyses tRNA(Sec) + L-serine + ATP = L-seryl-tRNA(Sec) + AMP + diphosphate + H(+). Its pathway is aminoacyl-tRNA biosynthesis; selenocysteinyl-tRNA(Sec) biosynthesis; L-seryl-tRNA(Sec) from L-serine and tRNA(Sec): step 1/1. In terms of biological role, catalyzes the attachment of serine to tRNA(Ser). Is also able to aminoacylate tRNA(Sec) with serine, to form the misacylated tRNA L-seryl-tRNA(Sec), which will be further converted into selenocysteinyl-tRNA(Sec). This Anaeromyxobacter sp. (strain K) protein is Serine--tRNA ligase.